Reading from the N-terminus, the 148-residue chain is Deoxyuridine 5'-triphosphate nucleotidohydrolase (148 aa).

Substrate-binding positions include 68 to 70 (RSG), Asn-81, 85 to 87 (TID), and Lys-95.

This sequence belongs to the dUTPase family. The cofactor is Mg(2+).

The enzyme catalyses dUTP + H2O = dUMP + diphosphate + H(+). It participates in pyrimidine metabolism; dUMP biosynthesis; dUMP from dCTP (dUTP route): step 2/2. In terms of biological role, this enzyme is involved in nucleotide metabolism: it produces dUMP, the immediate precursor of thymidine nucleotides and it decreases the intracellular concentration of dUTP so that uracil cannot be incorporated into DNA. The sequence is that of Deoxyuridine 5'-triphosphate nucleotidohydrolase from Rickettsia typhi (strain ATCC VR-144 / Wilmington).